A 365-amino-acid polypeptide reads, in one-letter code: Histidinol-phosphate aminotransferase 2 (365 aa).

At K226 the chain carries N6-(pyridoxal phosphate)lysine.

Belongs to the class-II pyridoxal-phosphate-dependent aminotransferase family. Histidinol-phosphate aminotransferase subfamily. As to quaternary structure, homodimer. Pyridoxal 5'-phosphate is required as a cofactor.

The enzyme catalyses L-histidinol phosphate + 2-oxoglutarate = 3-(imidazol-4-yl)-2-oxopropyl phosphate + L-glutamate. Its pathway is amino-acid biosynthesis; L-histidine biosynthesis; L-histidine from 5-phospho-alpha-D-ribose 1-diphosphate: step 7/9. This chain is Histidinol-phosphate aminotransferase 2 (hisC2), found in Pasteurella multocida (strain Pm70).